The chain runs to 282 residues: MILIDGKSLSKDLKERLATQVQEYKHNTAITPKLVAIIVGNDPASKTYVASKEKACAQVGIDSQVITLPEHTTESELLELIDQLNNDSSVHAILVQLPLPAHINKNNVIYSIKPEKDVDGFHPTNVGRLQLRDKKCLESCTPKGIMTMLREYGIKTEGAYAVVVGASNVVGKPVSQLLLNAKATVTTCHRFTTDLKSHTTKADILIVAVGKPNFITADMVKEGAVVIDVGINHVDGKIVGDVDFAAVKDKVAAITPVPGGVGPMTITELLYNTFQCAQELNR.

NADP(+) contacts are provided by residues 165–167 (GAS) and Ile231.

This sequence belongs to the tetrahydrofolate dehydrogenase/cyclohydrolase family. As to quaternary structure, homodimer.

The enzyme catalyses (6R)-5,10-methylene-5,6,7,8-tetrahydrofolate + NADP(+) = (6R)-5,10-methenyltetrahydrofolate + NADPH. It carries out the reaction (6R)-5,10-methenyltetrahydrofolate + H2O = (6R)-10-formyltetrahydrofolate + H(+). The protein operates within one-carbon metabolism; tetrahydrofolate interconversion. Functionally, catalyzes the oxidation of 5,10-methylenetetrahydrofolate to 5,10-methenyltetrahydrofolate and then the hydrolysis of 5,10-methenyltetrahydrofolate to 10-formyltetrahydrofolate. The protein is Bifunctional protein FolD of Francisella tularensis subsp. novicida (strain U112).